A 249-amino-acid chain; its full sequence is 5'-nucleotidase SurE (249 aa).

Residues Asp8, Asp9, Ser39, and Asn91 each coordinate a divalent metal cation.

The protein belongs to the SurE nucleotidase family. A divalent metal cation serves as cofactor.

Its subcellular location is the cytoplasm. It carries out the reaction a ribonucleoside 5'-phosphate + H2O = a ribonucleoside + phosphate. Nucleotidase that shows phosphatase activity on nucleoside 5'-monophosphates. The chain is 5'-nucleotidase SurE from Pseudomonas syringae pv. syringae (strain B728a).